Consider the following 343-residue polypeptide: Phosphoribosylformylglycinamidine cyclo-ligase (343 aa).

It belongs to the AIR synthase family.

The protein resides in the cytoplasm. The catalysed reaction is 2-formamido-N(1)-(5-O-phospho-beta-D-ribosyl)acetamidine + ATP = 5-amino-1-(5-phospho-beta-D-ribosyl)imidazole + ADP + phosphate + H(+). Its pathway is purine metabolism; IMP biosynthesis via de novo pathway; 5-amino-1-(5-phospho-D-ribosyl)imidazole from N(2)-formyl-N(1)-(5-phospho-D-ribosyl)glycinamide: step 2/2. This chain is Phosphoribosylformylglycinamidine cyclo-ligase, found in Enterococcus faecalis (strain ATCC 700802 / V583).